Here is a 325-residue protein sequence, read N- to C-terminus: Biotin synthase (325 aa).

The Radical SAM core domain occupies 51–280 (FMGRKADLCT…NVYIRYAGGR (230 aa)). The [4Fe-4S] cluster site is built by C69, C73, and C76. 4 residues coordinate [2Fe-2S] cluster: S113, C145, C205, and R275.

The protein belongs to the radical SAM superfamily. Biotin synthase family. Homodimer. [4Fe-4S] cluster serves as cofactor. It depends on [2Fe-2S] cluster as a cofactor.

The enzyme catalyses (4R,5S)-dethiobiotin + (sulfur carrier)-SH + 2 reduced [2Fe-2S]-[ferredoxin] + 2 S-adenosyl-L-methionine = (sulfur carrier)-H + biotin + 2 5'-deoxyadenosine + 2 L-methionine + 2 oxidized [2Fe-2S]-[ferredoxin]. The protein operates within cofactor biosynthesis; biotin biosynthesis; biotin from 7,8-diaminononanoate: step 2/2. Its function is as follows. Catalyzes the conversion of dethiobiotin (DTB) to biotin by the insertion of a sulfur atom into dethiobiotin via a radical-based mechanism. The protein is Biotin synthase of Clostridioides difficile (strain 630) (Peptoclostridium difficile).